The primary structure comprises 148 residues: Cytochrome c-type biogenesis protein CcmE (148 aa).

The Cytoplasmic segment spans residues 1–7; sequence MKPRHKK. A helical; Signal-anchor for type II membrane protein membrane pass occupies residues 8–28; sequence LAIIASSVTALGVASVLVLNA. The Periplasmic portion of the chain corresponds to 29–148; sequence FQSNLVFFFS…ADKARKTVMQ (120 aa). 2 residues coordinate heme: H123 and Y127.

This sequence belongs to the CcmE/CycJ family.

It localises to the cell inner membrane. Functionally, heme chaperone required for the biogenesis of c-type cytochromes. Transiently binds heme delivered by CcmC and transfers the heme to apo-cytochromes in a process facilitated by CcmF and CcmH. The polypeptide is Cytochrome c-type biogenesis protein CcmE (Nitrosospira multiformis (strain ATCC 25196 / NCIMB 11849 / C 71)).